Reading from the N-terminus, the 184-residue chain is Inorganic pyrophosphatase (184 aa).

Substrate contacts are provided by Lys-19, Arg-33, and Tyr-45. 3 residues coordinate Mg(2+): Asp-55, Asp-60, and Asp-92. Substrate is bound at residue Tyr-129.

This sequence belongs to the PPase family. As to quaternary structure, homohexamer. Mg(2+) is required as a cofactor.

Its subcellular location is the cytoplasm. The enzyme catalyses diphosphate + H2O = 2 phosphate + H(+). Catalyzes the hydrolysis of inorganic pyrophosphate (PPi) forming two phosphate ions. In Mycoplasma pneumoniae (strain ATCC 29342 / M129 / Subtype 1) (Mycoplasmoides pneumoniae), this protein is Inorganic pyrophosphatase.